The sequence spans 315 residues: Voltage-dependent calcium channel gamma-3 subunit (315 aa).

Transmembrane regions (helical) follow at residues 8-28 (VQML…TIAV), 104-124 (SSVF…CVAA), 135-155 (ILSA…GIIV), and 181-201 (FGAF…HIYI). The interval 232 to 252 (RRRSSSRSTEPRSRDLSPISK) is disordered. Ser248 carries the post-translational modification Phosphoserine.

This sequence belongs to the PMP-22/EMP/MP20 family. CACNG subfamily. The L-type calcium channel is composed of five subunits: alpha-1, alpha-2/delta, beta and gamma. Acts as an auxiliary subunit for AMPA-selective glutamate receptors (AMPARs). Found in a complex with GRIA1, GRIA2, GRIA3, GRIA4, CNIH2, CNIH3, CACNG2, CACNG4, CACNG5, CACNG7 and CACNG8. Interacts with AP4M1 and GRIA1; associates GRIA1 with the adaptor protein complex 4 (AP-4) to target GRIA1 to the somatodendritic compartment of neurons.

The protein resides in the membrane. Regulates the trafficking and gating properties of AMPA-selective glutamate receptors (AMPARs). Promotes their targeting to the cell membrane and synapses and modulates their gating properties by slowing their rates of activation, deactivation and desensitization. Does not show subunit-specific AMPA receptor regulation and regulates all AMPAR subunits. Thought to stabilize the calcium channel in an inactivated (closed) state. The protein is Voltage-dependent calcium channel gamma-3 subunit (CACNG3) of Bos taurus (Bovine).